The following is a 91-amino-acid chain: MVATNRCCVFALLFALLLVHSLTEAGKGKEVLGKIKDKLIEAKDKIKSGWERLTSQSEYACPAIEKFCEDHCAAKKAVGKCDDFKCNCIKL.

Positions 1–25 (MVATNRCCVFALLFALLLVHSLTEA) are cleaved as a signal peptide. Positions 26–44 (GKGKEVLGKIKDKLIEAKD) are excised as a propeptide. The BetaSPN-type CS-alpha/beta domain occupies 58 to 91 (EYACPAIEKFCEDHCAAKKAVGKCDDFKCNCIKL). 3 cysteine pairs are disulfide-bonded: Cys-61-Cys-81, Cys-68-Cys-86, and Cys-72-Cys-88.

This sequence belongs to the long chain scorpion toxin family. Class 2 subfamily. In terms of tissue distribution, expressed by the venom gland.

Its subcellular location is the secreted. In terms of biological role, the full peptide presents antibacterial and cytotoxic activities. The synthetic C-terminus (AA 33-76) inhibits voltage-gated potassium channels Kv1.1/KCNA1, Kv1.2/KCNA2, and Kv1.3/KCNA3. This is Potassium channel toxin TtrKIK from Tityus trivittatus (Argentinean scorpion).